The chain runs to 103 residues: Small ribosomal subunit protein uS10 (103 aa).

It belongs to the universal ribosomal protein uS10 family. In terms of assembly, part of the 30S ribosomal subunit.

Involved in the binding of tRNA to the ribosomes. The chain is Small ribosomal subunit protein uS10 from Cutibacterium acnes (strain DSM 16379 / KPA171202) (Propionibacterium acnes).